Consider the following 509-residue polypeptide: Maturase K (509 aa).

The protein belongs to the intron maturase 2 family. MatK subfamily.

The protein localises to the plastid. Its subcellular location is the chloroplast. Usually encoded in the trnK tRNA gene intron. Probably assists in splicing its own and other chloroplast group II introns. In Galbulimima belgraveana (Northern pigeonberry ash), this protein is Maturase K.